The chain runs to 482 residues: Keratin, type I cytoskeletal 39 (482 aa).

A disordered region spans residues 1-24; that stretch reads MDTKGSTVTISSSTPPQNCSGNTN. Positions 1–91 are head; that stretch reads MDTKGSTVTI…RCTEGINTHE (91 aa). The IF rod domain maps to 91 to 402; that stretch reads EKETMQILNE…SLLESLDGRL (312 aa). Positions 92–126 are coil 1A; sequence KETMQILNERLANYLEKVRMLEGENADLEDKIQEA. The tract at residues 127–137 is linker 1; sequence CSKALPILCPD. The interval 138-238 is coil 1B; that stretch reads YLSYYTTIEE…HEEEVNSLQC (101 aa). Residues 239–254 are linker 12; it reads QLGDRINIEVTAAPSV. A coil 2 region spans residues 255–398; the sequence is DLNQILQEMR…ATYRSLLESL (144 aa). The tail stretch occupies residues 399–482; the sequence is DGRLPCNPCA…PCYITRATKV (84 aa).

Belongs to the intermediate filament family. Heterotetramer of two type I and two type II keratins.

May play a role in late hair differentiation. The protein is Keratin, type I cytoskeletal 39 (Krt39) of Mus musculus (Mouse).